The following is a 306-amino-acid chain: Methyl-CpG-binding domain-containing protein 7 (306 aa).

The segment covering 1-11 (MQTRSSSSPSA) has biased composition (polar residues). Residues 1 to 21 (MQTRSSSSPSANHRRETQLQI) form a disordered region. MBD domains follow at residues 21–92 (IADP…QDKT), 106–171 (GVEY…RVLQ), and 172–242 (NRRG…ERLP). Asymmetric dimethylarginine is present on residues arginine 118, arginine 145, and arginine 174. Residues 163 to 306 (IEQQLRVLQN…AFVSLIEDRS (144 aa)) form a required for interaction with PRMT11 region.

As to quaternary structure, interacts with PRMT11. Interacts (via C-terminus) with IDM2, but not with IDM1. Interacts with IDM3. Part of a complex made of MBD7, IDM1, IDM2 and IDM3. In terms of processing, methylated by PRMT11. Expressed in leaves, buds, flowers, stems, siliques, mature seeds and roots.

It localises to the nucleus. The protein resides in the chromosome. Its function is as follows. Transcriptional regulator that binds CpG islands in promoters where the DNA is methylated at position 5 of cytosine within CpG dinucleotides. May directly affect chromatin structure by inducing intra- and inter- chromatin compaction via bridging over multiple methylated CpG sites. Acts as an anti-silencing factor that prevents DNA hypermethylation and gene repression. Requires high mCG density for binding. Recognizes preferentially mCGs located in transposable elements. Required for active DNA demethylation. Prefers to target genomic loci around chromocenters. The chain is Methyl-CpG-binding domain-containing protein 7 from Arabidopsis thaliana (Mouse-ear cress).